The chain runs to 309 residues: Tagatose-6-phosphate kinase (309 aa).

This sequence belongs to the carbohydrate kinase PfkB family. LacC subfamily.

It carries out the reaction D-tagatofuranose 6-phosphate + ATP = D-tagatofuranose 1,6-bisphosphate + ADP + H(+). Its pathway is carbohydrate metabolism; D-tagatose 6-phosphate degradation; D-glyceraldehyde 3-phosphate and glycerone phosphate from D-tagatose 6-phosphate: step 1/2. In Streptococcus sanguinis (strain SK36), this protein is Tagatose-6-phosphate kinase.